A 576-amino-acid chain; its full sequence is Eukaryotic translation initiation factor 3 subunit L (576 aa).

The PCI domain occupies 330 to 536 (DAIRVFANIL…IHIADTKVAR (207 aa)).

This sequence belongs to the eIF-3 subunit L family. In terms of assembly, component of the eukaryotic translation initiation factor 3 (eIF-3) complex, which is composed of 13 subunits: eif3a, eif3b, eif3c, eif3d, eif3e, eif3f, eif3g, eif3h, eif3i, eif3j, eif3k, eif3l and eif3m.

The protein localises to the cytoplasm. Its function is as follows. Component of the eukaryotic translation initiation factor 3 (eIF-3) complex, which is involved in protein synthesis of a specialized repertoire of mRNAs and, together with other initiation factors, stimulates binding of mRNA and methionyl-tRNAi to the 40S ribosome. The eIF-3 complex specifically targets and initiates translation of a subset of mRNAs involved in cell proliferation. This Danio rerio (Zebrafish) protein is Eukaryotic translation initiation factor 3 subunit L (eif3l).